Here is a 199-residue protein sequence, read N- to C-terminus: Chaperone protein TorD (199 aa).

The protein belongs to the TorD/DmsD family. TorD subfamily.

Its subcellular location is the cytoplasm. Involved in the biogenesis of TorA. Acts on TorA before the insertion of the molybdenum cofactor and, as a result, probably favors a conformation of the apoenzyme that is competent for acquiring the cofactor. In Shigella dysenteriae serotype 1 (strain Sd197), this protein is Chaperone protein TorD.